A 158-amino-acid polypeptide reads, in one-letter code: NADH-quinone oxidoreductase subunit B (158 aa).

[4Fe-4S] cluster-binding residues include Cys-37, Cys-38, Cys-102, and Cys-132.

This sequence belongs to the complex I 20 kDa subunit family. As to quaternary structure, NDH-1 is composed of 14 different subunits. Subunits NuoB, C, D, E, F, and G constitute the peripheral sector of the complex. [4Fe-4S] cluster serves as cofactor.

Its subcellular location is the cell inner membrane. The enzyme catalyses a quinone + NADH + 5 H(+)(in) = a quinol + NAD(+) + 4 H(+)(out). In terms of biological role, NDH-1 shuttles electrons from NADH, via FMN and iron-sulfur (Fe-S) centers, to quinones in the respiratory chain. Couples the redox reaction to proton translocation (for every two electrons transferred, four hydrogen ions are translocated across the cytoplasmic membrane), and thus conserves the redox energy in a proton gradient. The sequence is that of NADH-quinone oxidoreductase subunit B from Bordetella avium (strain 197N).